We begin with the raw amino-acid sequence, 369 residues long: Mycofactocin maturase MftC (369 aa).

Positions 16-232 constitute a Radical SAM core domain; that stretch reads LDAPICLTWE…KGERVLTGDS (217 aa). [4Fe-4S] cluster contacts are provided by cysteine 30, cysteine 34, cysteine 37, cysteine 251, cysteine 258, cysteine 269, cysteine 310, cysteine 313, cysteine 319, cysteine 323, and cysteine 341. A disordered region spans residues 347–369; it reads APALAQERHAPRPRVDHSRGSRE. Over residues 352 to 369 the composition is skewed to basic and acidic residues; sequence QERHAPRPRVDHSRGSRE.

This sequence belongs to the radical SAM superfamily. MftC family. As to quaternary structure, interacts with MftB. [4Fe-4S] cluster is required as a cofactor.

It carries out the reaction [mycofactocin precursor peptide]-C-terminal glycyl-L-valyl-L-tyrosine + S-adenosyl-L-methionine = [mycofactocin precursor peptide]-C-terminal glycyl-N-{[2-(4-hydroxyphenyl)ethenyl]-3-methylbutanamide} + 5'-deoxyadenosine + L-methionine + CO2. It catalyses the reaction [mycofactocin precursor peptide]-C-terminal glycyl-N-{[2-(4-hydroxyphenyl)ethenyl]-3-methylbutanamide} + AH2 + S-adenosyl-L-methionine = [mycofactocin precursor peptide]-C-terminal glycyl-N-{5-[(4-hydroxyphenyl)methyl]-4,4-dimethyl-2-oxopyrrolidin-3-yl}acetamide + 5'-deoxyadenosine + L-methionine + A + H(+). Radical S-adenosylmethionine (SAM) enzyme responsible for the first step of the biosynthesis of the enzyme cofactor mycofactocin (MFT). Catalyzes two reactions at the C-terminus of the mycofactocin precursor (the MftA peptide). The first one is the oxidative decarboxylation of the C-terminal L-tyrosine of MftA, forming an unsaturated tyramine moiety. The second reaction is the cross-linking of the tyramine with the penultimate L-valine residue, forming a five-membered lactam ring. Its activity requires the presence of the MftB chaperone. The chain is Mycofactocin maturase MftC from Mycobacterium ulcerans (strain Agy99).